A 288-amino-acid polypeptide reads, in one-letter code: METSLRRAAAPAGAVAERTVLRNGGAVRDAVAVEEPLEIRVDGDRLATTMRTPGADADLALGFLFAEGIIAGVEDVGTVIHCGRPGEEGYGNVMDVRSAAGMRIDPERILEGRRFVPVSAACGVCGRLSIDHLMERIHPLPAGEPVAPALVAAGMEILARSQPVFERTGGLHAAVLVGRDGAPIASAEDVGRHNAVDKVVGAALRAGRVGPRAAAGPAPALLAVSGRAGFEIVQKAAAAGVPVIASVSAPSSLAVDLARAAGVTLCGFVRGERMNVYANGERLGLTGP.

C122 functions as the Cysteine persulfide intermediate in the catalytic mechanism. Residue 268 to 273 (FVRGER) participates in Mo-bis(molybdopterin guanine dinucleotide) binding.

The protein belongs to the FdhD family.

The protein localises to the cytoplasm. Required for formate dehydrogenase (FDH) activity. Acts as a sulfur carrier protein that transfers sulfur from IscS to the molybdenum cofactor prior to its insertion into FDH. In Anaeromyxobacter dehalogenans (strain 2CP-1 / ATCC BAA-258), this protein is Sulfur carrier protein FdhD.